The chain runs to 279 residues: Probable endonuclease 4 (279 aa).

9 residues coordinate Zn(2+): H69, H109, E145, D179, H182, H216, D229, H231, and E261.

This sequence belongs to the AP endonuclease 2 family. It depends on Zn(2+) as a cofactor.

It catalyses the reaction Endonucleolytic cleavage to 5'-phosphooligonucleotide end-products.. In terms of biological role, endonuclease IV plays a role in DNA repair. It cleaves phosphodiester bonds at apurinic or apyrimidinic (AP) sites, generating a 3'-hydroxyl group and a 5'-terminal sugar phosphate. The protein is Probable endonuclease 4 of Chlorobium luteolum (strain DSM 273 / BCRC 81028 / 2530) (Pelodictyon luteolum).